The sequence spans 359 residues: Outer membrane protein assembly factor BamC (359 aa).

Residues methionine 1–serine 21 form the signal peptide. Cysteine 22 is lipidated: N-palmitoyl cysteine. The S-diacylglycerol cysteine moiety is linked to residue cysteine 22.

The protein belongs to the BamC family. As to quaternary structure, part of the Bam complex.

The protein resides in the cell outer membrane. Functionally, part of the outer membrane protein assembly complex, which is involved in assembly and insertion of beta-barrel proteins into the outer membrane. The protein is Outer membrane protein assembly factor BamC of Kangiella koreensis (strain DSM 16069 / JCM 12317 / KCTC 12182 / SW-125).